The primary structure comprises 20 residues: Cytochrome P450 2A7 (20 aa).

This sequence belongs to the cytochrome P450 family. It depends on heme as a cofactor.

It localises to the endoplasmic reticulum membrane. The protein localises to the microsome membrane. It catalyses the reaction an organic molecule + reduced [NADPH--hemoprotein reductase] + O2 = an alcohol + oxidized [NADPH--hemoprotein reductase] + H2O + H(+). Exhibits a high coumarin 7-hydroxylase activity. In Papio sp. (Baboon), this protein is Cytochrome P450 2A7 (CYP2A7).